A 394-amino-acid polypeptide reads, in one-letter code: Aspergillopepsin-1 (394 aa).

Residues 1 to 20 (MVVFSKTAALVLGLSTAVSA) form the signal peptide. Residues 21–69 (APAPTRKGFTINQIARPANKTRTVNLPGLYARSLAKFGGTVPQSVKEAA) constitute a propeptide, activation peptide. A Peptidase A1 domain is found at 85-391 (YLTPVTVGKS…NSEGPKLGFA (307 aa)). Asp101 is a catalytic residue. O-linked (Man...) serine glycosylation is found at Ser129 and Ser304. Residues Cys319 and Cys354 are joined by a disulfide bond.

The protein belongs to the peptidase A1 family. In terms of assembly, monomer.

The protein localises to the secreted. The enzyme catalyses Hydrolysis of proteins with broad specificity. Generally favors hydrophobic residues in P1 and P1', but also accepts Lys in P1, which leads to activation of trypsinogen. Does not clot milk.. Secreted aspartic endopeptidase that allows assimilation of proteinaceous substrates. The scissile peptide bond is attacked by a nucleophilic water molecule activated by two aspartic residues in the active site. Shows a broad primary substrate specificity. Favors hydrophobic residues at the P1 and P1' positions, but also accepts a lysine residue in the P1 position, leading to the activation of trypsinogen and chymotrypsinogen A. The chain is Aspergillopepsin-1 (pepA) from Aspergillus phoenicis (Aspergillus saitoi).